Reading from the N-terminus, the 283-residue chain is Bifunctional protein FolD (283 aa).

NADP(+) is bound by residues 163 to 165 (GRS), S188, and I229.

It belongs to the tetrahydrofolate dehydrogenase/cyclohydrolase family. In terms of assembly, homodimer.

It catalyses the reaction (6R)-5,10-methylene-5,6,7,8-tetrahydrofolate + NADP(+) = (6R)-5,10-methenyltetrahydrofolate + NADPH. The catalysed reaction is (6R)-5,10-methenyltetrahydrofolate + H2O = (6R)-10-formyltetrahydrofolate + H(+). It participates in one-carbon metabolism; tetrahydrofolate interconversion. Catalyzes the oxidation of 5,10-methylenetetrahydrofolate to 5,10-methenyltetrahydrofolate and then the hydrolysis of 5,10-methenyltetrahydrofolate to 10-formyltetrahydrofolate. In Campylobacter concisus (strain 13826), this protein is Bifunctional protein FolD.